A 348-amino-acid chain; its full sequence is Secreted frizzled-related protein 4 (348 aa).

An N-terminal signal peptide occupies residues 1-18 (MLLSILVALCLCVRLALG). The 121-residue stretch at 19–139 (VRGAPCEAVR…VYDRGVCISP (121 aa)) folds into the FZ domain. Intrachain disulfides connect cysteine 24-cysteine 85, cysteine 32-cysteine 78, cysteine 69-cysteine 108, cysteine 97-cysteine 136, and cysteine 101-cysteine 125. N-linked (GlcNAc...) asparagine glycosylation is found at asparagine 38 and asparagine 68. Residues asparagine 116, asparagine 194, and asparagine 240 are each glycosylated (N-linked (GlcNAc...) asparagine). An NTR domain is found at 178-296 (CKCKKVKPTL…WEERLQEQQR (119 aa)). Residues 289-303 (ERLQEQQRTTQDKKQ) are compositionally biased toward basic and acidic residues. Positions 289–348 (ERLQEQQRTTQDKKQIASRTSRSNPPKPKGRSPASKPASPKKNIKARSAPKKSNPKKSTS) are disordered. The segment covering 330–348 (KNIKARSAPKKSNPKKSTS) has biased composition (basic residues).

The protein belongs to the secreted frizzled-related protein (sFRP) family. In terms of tissue distribution, expressed in the involuting mammary gland, ovarian corpus luteum and prostate. In ovaries, low levels found in granulosa cells. High levels in corpora lutea of pregnant animals.

The protein resides in the secreted. In terms of biological role, soluble frizzled-related proteins (sFRPS) function as modulators of Wnt signaling through direct interaction with Wnts. They have a role in regulating cell growth and differentiation in specific cell types. SFRP4 plays a role in bone morphogenesis. May also act as a regulator of adult uterine morphology and function. May also increase apoptosis during ovulation possibly through modulation of FZ1/FZ4/WNT4 signaling. Has phosphaturic effects by specifically inhibiting sodium-dependent phosphate uptake. This is Secreted frizzled-related protein 4 (Sfrp4) from Rattus norvegicus (Rat).